The chain runs to 556 residues: 2-succinyl-5-enolpyruvyl-6-hydroxy-3-cyclohexene-1-carboxylate synthase (556 aa).

The protein belongs to the TPP enzyme family. MenD subfamily. As to quaternary structure, homodimer. The cofactor is Mg(2+). Requires Mn(2+) as cofactor. Thiamine diphosphate is required as a cofactor.

The enzyme catalyses isochorismate + 2-oxoglutarate + H(+) = 5-enolpyruvoyl-6-hydroxy-2-succinyl-cyclohex-3-ene-1-carboxylate + CO2. The protein operates within quinol/quinone metabolism; 1,4-dihydroxy-2-naphthoate biosynthesis; 1,4-dihydroxy-2-naphthoate from chorismate: step 2/7. It functions in the pathway quinol/quinone metabolism; menaquinone biosynthesis. In terms of biological role, catalyzes the thiamine diphosphate-dependent decarboxylation of 2-oxoglutarate and the subsequent addition of the resulting succinic semialdehyde-thiamine pyrophosphate anion to isochorismate to yield 2-succinyl-5-enolpyruvyl-6-hydroxy-3-cyclohexene-1-carboxylate (SEPHCHC). The protein is 2-succinyl-5-enolpyruvyl-6-hydroxy-3-cyclohexene-1-carboxylate synthase of Salmonella arizonae (strain ATCC BAA-731 / CDC346-86 / RSK2980).